The chain runs to 101 residues: Putative pterin-4-alpha-carbinolamine dehydratase (101 aa).

The protein belongs to the pterin-4-alpha-carbinolamine dehydratase family.

The catalysed reaction is (4aS,6R)-4a-hydroxy-L-erythro-5,6,7,8-tetrahydrobiopterin = (6R)-L-erythro-6,7-dihydrobiopterin + H2O. This chain is Putative pterin-4-alpha-carbinolamine dehydratase, found in Rhodopseudomonas palustris (strain BisB18).